The following is a 297-amino-acid chain: Lipoyl synthase (297 aa).

Positions 40, 45, 51, 67, 71, 74, and 280 each coordinate [4Fe-4S] cluster. The 217-residue stretch at 53-269 folds into the Radical SAM core domain; sequence AVRKTATFMI…KEIALSKGFS (217 aa).

This sequence belongs to the radical SAM superfamily. Lipoyl synthase family. It depends on [4Fe-4S] cluster as a cofactor.

The protein localises to the cytoplasm. The enzyme catalyses [[Fe-S] cluster scaffold protein carrying a second [4Fe-4S](2+) cluster] + N(6)-octanoyl-L-lysyl-[protein] + 2 oxidized [2Fe-2S]-[ferredoxin] + 2 S-adenosyl-L-methionine + 4 H(+) = [[Fe-S] cluster scaffold protein] + N(6)-[(R)-dihydrolipoyl]-L-lysyl-[protein] + 4 Fe(3+) + 2 hydrogen sulfide + 2 5'-deoxyadenosine + 2 L-methionine + 2 reduced [2Fe-2S]-[ferredoxin]. It participates in protein modification; protein lipoylation via endogenous pathway; protein N(6)-(lipoyl)lysine from octanoyl-[acyl-carrier-protein]. Its function is as follows. Catalyzes the radical-mediated insertion of two sulfur atoms into the C-6 and C-8 positions of the octanoyl moiety bound to the lipoyl domains of lipoate-dependent enzymes, thereby converting the octanoylated domains into lipoylated derivatives. This chain is Lipoyl synthase, found in Bacillus cereus (strain ATCC 14579 / DSM 31 / CCUG 7414 / JCM 2152 / NBRC 15305 / NCIMB 9373 / NCTC 2599 / NRRL B-3711).